The following is a 486-amino-acid chain: PTS system N-acetylmuramic acid-specific EIIBC component (486 aa).

The region spanning 1-89 (MAKITQTMIS…NKLIESVING (89 aa)) is the PTS EIIB type-1 domain. Catalysis depends on Cys28, which acts as the Phosphocysteine intermediate; for EIIB activity. Residues 127–486 (SKFATIFTPL…FFGSKDVDLS (360 aa)) form the PTS EIIC type-1 domain. The next 10 helical transmembrane spans lie at 129 to 149 (FATIFTPLIPGFIAAGLLLGF), 170 to 190 (LIAYMKVFGKGLFAFLSILIG), 196 to 216 (AFGGSGVNGAILASLFVLGYN), 230 to 250 (FFGYTIDPRGNIIGVLLAAII), 268 to 288 (MILTSVVTLLIMGVVTFVVIM), 312 to 332 (AAILAGLFLISVVFGIHQGFV), 347 to 367 (LFPILAMAGGGQVGASLALYF), 381 to 401 (GAIIPGILGIGEPLIYGVTLP), 411 to 431 (IGGAAGGFFIGLVSYLGLPVG), and 453 to 473 (IFAGMAVFVVGLLISYVVGFL).

Its subcellular location is the cell inner membrane. It carries out the reaction N-acetyl-beta-D-muramate(out) + N(pros)-phospho-L-histidyl-[protein] = N-acetyl-beta-D-muramate 6-phosphate(in) + L-histidyl-[protein]. In terms of biological role, the phosphoenolpyruvate-dependent sugar phosphotransferase system (sugar PTS), a major carbohydrate active transport system, catalyzes the phosphorylation of incoming sugar substrates concomitantly with their translocation across the cell membrane. This system is involved in N-acetylmuramic acid (MurNAc) transport, yielding cytoplasmic MurNAc-6-P. Is also able to take up anhydro-N-acetylmuramic acid (anhMurNAc), but cannot phosphorylate the carbon 6, probably because of the 1,6-anhydro ring. The sequence is that of PTS system N-acetylmuramic acid-specific EIIBC component (murP) from Vibrio vulnificus (strain YJ016).